The primary structure comprises 180 residues: D(1A) dopamine receptor (180 aa).

The chain crosses the membrane as a helical span at residues N1–I10. Residues R11–N21 lie on the Cytoplasmic side of the membrane. Residues F22–A48 traverse the membrane as a helical segment. Residues G49–C57 are Extracellular-facing. Residues C57 and C147 are joined by a disulfide bond. The chain crosses the membrane as a helical span at residues N58–V80. Residues D81–K99 lie on the Cytoplasmic side of the membrane. A helical transmembrane segment spans residues A100–W124. The Extracellular portion of the chain corresponds to H125–R153. N136 is a glycosylation site (N-linked (GlcNAc...) asparagine). A helical membrane pass occupies residues T154 to H179. A topological domain (cytoplasmic) is located at residue R180.

Belongs to the G-protein coupled receptor 1 family. Interacts with DNAJC14 via its C-terminus. Interacts with DRD2. Interacts with DORIP1.

The protein resides in the cell membrane. The protein localises to the endoplasmic reticulum membrane. It is found in the cell projection. It localises to the cilium membrane. Dopamine receptor whose activity is mediated by G proteins which activate adenylyl cyclase. The polypeptide is D(1A) dopamine receptor (DRD1) (Oryctolagus cuniculus (Rabbit)).